We begin with the raw amino-acid sequence, 744 residues long: MNSNIEDDPWSSGWNDDNDNNNNNNTSINDPLTGATATTTPYQSSYLTSSQLFTSTGGGGSGSGGGYNSGVNTYNTTIPPNLINVPSSYETIYSHFITKYNNNNNNNNSNSTFTLNDFEINIIDKLISLNYLTNYQKQKILDIIYENNLLPINQSFKFYQILGLLALEIDVPGTGDYVTLQFRLNNNLPDLPEKFINEIINEENEQEEQTSGLLGNRNRSIQSHSHFGPNNQDDWNIDDSTTISGGGGGGGGNFGDPLLVDHSYIHDDLIDESRSVGGTQPQQGGGGGSGGGSGSGSGTIAPNVDSSYIEKYINDIKDQFKPLFSGIDLIKIKEVPEKEGIIFKHINYMITHDLKIGGTSSGTKKVIRRYSDFVWLMEYLLEKYPFRVIPGLPPKKFTGASPDSQFLQRRRRGLHRFLNQLIKHPILSQEPIVQSFLTVPTDLTTWKKQAKIDSSLEFKGQKIQTDFINVIWPIMGEPFLKKWRQAEENIQFIIDKWVKIIILVERYERRQQQISFDNGKFAEMLNGFSKLNTKIYPDNEDNNNSTRNDVNVNVVVVDNNENYKQDFDFNSSGDIININQCLNSIGEFFNKSSQVLIDESYIINTKTLEKFKNYLDYLNSLQELFERTKQLSINQIDLLDKRIKDQEIKFKKISEENPDIKGGELIKLRQSIINDKQEIFQQLNKDWLIKQCCLQEFIIFQETQFLITELWVEWCKDRLKCQEKLVGLYDNLNQEIIHDMPLER.

Disordered stretches follow at residues 1–40 (MNSN…ATTT), 218–252 (NRSI…GGGG), and 273–299 (SRSV…GSGT). Polar residues-rich tracts occupy residues 26 to 40 (TSIN…ATTT) and 218 to 243 (NRSI…STTI). Gly residues predominate over residues 283-297 (QGGGGGSGGGSGSGS). In terms of domain architecture, PX spans 326–444 (GIDLIKIKEV…SFLTVPTDLT (119 aa)). 4 residues coordinate a 1,2-diacyl-sn-glycero-3-phospho-(1D-myo-inositol-3-phosphate): Arg369, Ser371, Lys395, and Arg410.

Belongs to the sorting nexin family.

It is found in the cytoplasm. It localises to the membrane. Required for vacuolar protein sorting. The protein is Sorting nexin MVP1 (MVP1) of Candida albicans (strain SC5314 / ATCC MYA-2876) (Yeast).